A 214-amino-acid polypeptide reads, in one-letter code: ATP phosphoribosyltransferase (214 aa).

The protein belongs to the ATP phosphoribosyltransferase family. Short subfamily. Heteromultimer composed of HisG and HisZ subunits.

Its subcellular location is the cytoplasm. The enzyme catalyses 1-(5-phospho-beta-D-ribosyl)-ATP + diphosphate = 5-phospho-alpha-D-ribose 1-diphosphate + ATP. Its pathway is amino-acid biosynthesis; L-histidine biosynthesis; L-histidine from 5-phospho-alpha-D-ribose 1-diphosphate: step 1/9. Its function is as follows. Catalyzes the condensation of ATP and 5-phosphoribose 1-diphosphate to form N'-(5'-phosphoribosyl)-ATP (PR-ATP). Has a crucial role in the pathway because the rate of histidine biosynthesis seems to be controlled primarily by regulation of HisG enzymatic activity. The chain is ATP phosphoribosyltransferase from Marinomonas sp. (strain MWYL1).